We begin with the raw amino-acid sequence, 99 residues long: Integration host factor subunit alpha (99 aa).

This sequence belongs to the bacterial histone-like protein family. Heterodimer of an alpha and a beta chain.

Its function is as follows. This protein is one of the two subunits of integration host factor, a specific DNA-binding protein that functions in genetic recombination as well as in transcriptional and translational control. The protein is Integration host factor subunit alpha (ihfA) of Xylella fastidiosa (strain 9a5c).